Reading from the N-terminus, the 177-residue chain is Large ribosomal subunit protein uL6 (177 aa).

The protein belongs to the universal ribosomal protein uL6 family. As to quaternary structure, part of the 50S ribosomal subunit.

This protein binds to the 23S rRNA, and is important in its secondary structure. It is located near the subunit interface in the base of the L7/L12 stalk, and near the tRNA binding site of the peptidyltransferase center. The sequence is that of Large ribosomal subunit protein uL6 from Citrobacter koseri (strain ATCC BAA-895 / CDC 4225-83 / SGSC4696).